The sequence spans 640 residues: Envelope glycoprotein (640 aa).

A signal peptide spans 1-32; that stretch reads MEGPAFSKPLKDKINPWGPLIILGILIRAGVS. Residues 33-582 are Extracellular-facing; sequence VQHDSPHQVF…FNKSPWFTTL (550 aa). N-linked (GlcNAc...) asparagine; by host glycosylation is found at Asn43 and Asn58. 2 disulfides stabilise this stretch: Cys109-Cys126 and Cys118-Cys131. N-linked (GlcNAc...) asparagine; by host glycosylation is present at Asn297. 6 disulfide bridges follow: Cys307-Cys310, Cys307-Cys535, Cys337-Cys391, Cys356-Cys368, Cys398-Cys411, and Cys527-Cys534. The CXXC motif lies at 307–310; sequence CWLC. Residues Asn329 and Asn336 are each glycosylated (N-linked (GlcNAc...) asparagine; by host). Asn369 carries an N-linked (GlcNAc...) asparagine; by host glycan. Residues 444–464 are fusion peptide; sequence VSLTLALLLGGLTMGGIAAGV. Residues 473-509 adopt a coiled-coil conformation; it reads ATQQFQQLQAAMHDDLKEVEKSITNLEKSLTSLSEVV. The segment at 510-526 is immunosuppression; that stretch reads LQNRRGLDLLFLKEGGL. Residues 527–535 carry the CX6CC motif; it reads CAALKEECC. Residues 583-603 form a helical membrane-spanning segment; it reads ISTIMGPLIILLLILLFGPWI. Over 604–640 the chain is Cytoplasmic; the sequence is LNRLVQFIKDRISVVQALVLTQQYHQLKTIGDCKSRE. The short motif at 627–630 is the YXXL motif; contains endocytosis signal element; that stretch reads YHQL.

In terms of assembly, the mature envelope protein (Env) consists of a trimer of SU-TM heterodimers attached by a labile interchain disulfide bond. Specific enzymatic cleavages in vivo yield mature proteins. Envelope glycoproteins are synthesized as an inactive precursor that is N-glycosylated and processed likely by host cell furin or by a furin-like protease in the Golgi to yield the mature SU and TM proteins. The cleavage site between SU and TM requires the minimal sequence [KR]-X-[KR]-R. The R-peptide is released from the C-terminus of the cytoplasmic tail of the TM protein upon particle formation as a result of proteolytic cleavage by the viral protease. Cleavage of this peptide is required for TM to become fusogenic. In terms of processing, the CXXC motif is highly conserved across a broad range of retroviral envelope proteins. It is thought to participate in the formation of a labile disulfide bond possibly with the CX6CC motif present in the transmembrane protein. Isomerization of the intersubunit disulfide bond to an SU intrachain disulfide bond is thought to occur upon receptor recognition in order to allow membrane fusion. Post-translationally, the R-peptide is palmitoylated.

Its subcellular location is the virion membrane. The protein localises to the host cell membrane. Its function is as follows. The surface protein (SU) attaches the virus to the host cell by binding to its receptor. This interaction triggers the refolding of the transmembrane protein (TM) and is thought to activate its fusogenic potential by unmasking its fusion peptide. Fusion occurs at the host cell plasma membrane. Functionally, the transmembrane protein (TM) acts as a class I viral fusion protein. Under the current model, the protein has at least 3 conformational states: pre-fusion native state, pre-hairpin intermediate state, and post-fusion hairpin state. During viral and target cell membrane fusion, the coiled coil regions (heptad repeats) assume a trimer-of-hairpins structure, positioning the fusion peptide in close proximity to the C-terminal region of the ectodomain. The formation of this structure appears to drive apposition and subsequent fusion of viral and target cell membranes. Membranes fusion leads to delivery of the nucleocapsid into the cytoplasm. The protein is Envelope glycoprotein (env) of Mus musculus (Mouse).